A 295-amino-acid polypeptide reads, in one-letter code: MFYIQSSEALQILKNSLRKHLPESLKVYGTVFHMNQGNPFKLKAVVDKWPDFNTVVIRPQEQDMTDDLDHYNNTYLIYSKDPKHCQEFLGSSDVINWKQHLQIQSSQADLGKVIENLGATNLGKVKHKQCFLYMVSHTAKKLTPSLVDAKHLVVSSEKPTPFDHQLFKFARLDVKHAALVNSIWYFGGNEKSQKFIERCIFTFPSVCIMGPEGTPVSWALMDHTGELRMAGTLPKYRHQNLIYHVAFHQVHTLEKLGFPMYLHVDKVNLTIQRMSAVLGHVPMPCTWNQWNWVPL.

Lysine 41 is modified (N6-acetyllysine; alternate). N6-succinyllysine; alternate is present on lysine 41. The residue at position 43 (lysine 43) is an N6-acetyllysine. Lysine 48 carries the N6-acetyllysine; alternate modification. Lysine 48 carries the N6-succinyllysine; alternate modification. N6-acetyllysine occurs at positions 80 and 83. An N6-acetyllysine; alternate mark is found at lysine 124, lysine 128, and lysine 140. Residues lysine 124, lysine 128, and lysine 140 each carry the N6-succinyllysine; alternate modification. At lysine 150 the chain carries N6-acetyllysine. At lysine 255 the chain carries N6-acetyllysine; alternate. N6-succinyllysine; alternate is present on lysine 255.

It belongs to the glycine N-acyltransferase family. In terms of assembly, binds to microtubules. Specifically expressed in kidney and liver. Up-regulated in the regenerating liver as well as in hepatocellular carcinoma.

Its subcellular location is the cytoplasm. It is found in the cytoskeleton. The protein resides in the microtubule organizing center. It localises to the centrosome. The enzyme catalyses an acyl-CoA + glycine = an N-acylglycine + CoA + H(+). Acyltransferase which transfers the acyl group to the N-terminus of glycine. Can conjugate a multitude of substrates to form a variety of N-acylglycines. This chain is Glycine N-acyltransferase-like protein Keg1 (Keg1), found in Rattus norvegicus (Rat).